The following is a 330-amino-acid chain: tRNA U34 carboxymethyltransferase (330 aa).

Residues K91, W105, K110, G130, 152–154 (DPS), 181–182 (IE), M196, Y200, and R315 contribute to the carboxy-S-adenosyl-L-methionine site.

This sequence belongs to the class I-like SAM-binding methyltransferase superfamily. CmoB family. Homotetramer.

It carries out the reaction carboxy-S-adenosyl-L-methionine + 5-hydroxyuridine(34) in tRNA = 5-carboxymethoxyuridine(34) in tRNA + S-adenosyl-L-homocysteine + H(+). Catalyzes carboxymethyl transfer from carboxy-S-adenosyl-L-methionine (Cx-SAM) to 5-hydroxyuridine (ho5U) to form 5-carboxymethoxyuridine (cmo5U) at position 34 in tRNAs. The chain is tRNA U34 carboxymethyltransferase from Shewanella frigidimarina (strain NCIMB 400).